The primary structure comprises 252 residues: MQIFHNLNEWIRFRNSLSPDLSLGFAPTMGNLHAGHASLFLASSKENHYTVSSLFVNPTQFNNPDDYKHYPRTVDADLELMTQNGVDFCILPNENEIYADGYAYQVQENRFGQLMEGKHRPGHFNGVLTIVMKLFNLVKPTRAYFGEKDYQQLLLIQGMVKALFMDIEIKSCPTVREKSGLACSSRNNRLTPSQREIADEFAKIFHQNKSSAMISKELEALGITVEYIEEFQGRRFAAVKIGDIRLIDNYLL.

ATP is bound at residue M29 to H36. H36 functions as the Proton donor in the catalytic mechanism. Q60 lines the (R)-pantoate pocket. Q60 contributes to the beta-alanine binding site. Residue G146–D149 participates in ATP binding. Q152 lines the (R)-pantoate pocket. Residues V175 and C183–R186 contribute to the ATP site.

This sequence belongs to the pantothenate synthetase family. Homodimer.

The protein resides in the cytoplasm. It carries out the reaction (R)-pantoate + beta-alanine + ATP = (R)-pantothenate + AMP + diphosphate + H(+). It functions in the pathway cofactor biosynthesis; (R)-pantothenate biosynthesis; (R)-pantothenate from (R)-pantoate and beta-alanine: step 1/1. Functionally, catalyzes the condensation of pantoate with beta-alanine in an ATP-dependent reaction via a pantoyl-adenylate intermediate. In Legionella pneumophila (strain Lens), this protein is Pantothenate synthetase.